The sequence spans 339 residues: Ribosomal RNA small subunit methyltransferase C (339 aa).

The protein belongs to the methyltransferase superfamily. RsmC family. In terms of assembly, monomer.

The protein localises to the cytoplasm. It catalyses the reaction guanosine(1207) in 16S rRNA + S-adenosyl-L-methionine = N(2)-methylguanosine(1207) in 16S rRNA + S-adenosyl-L-homocysteine + H(+). Functionally, specifically methylates the guanine in position 1207 of 16S rRNA in the 30S particle. The protein is Ribosomal RNA small subunit methyltransferase C of Aliivibrio fischeri (strain ATCC 700601 / ES114) (Vibrio fischeri).